A 314-amino-acid polypeptide reads, in one-letter code: BTB/POZ domain-containing protein KCTD17 (314 aa).

In terms of domain architecture, BTB spans 24-94; it reads KWVRLNVGGT…LRHGKLVLDK (71 aa). Residues 190-268 form a disordered region; the sequence is STPNGLSSES…PAGGSRPHPL (79 aa). Residues 196-239 are a coiled coil; it reads SSESSRKTKSTEEQLEEQQQQEEEVEEVEVEQVQVEADAQEKAQ. Positions 208–225 are enriched in acidic residues; sequence EQLEEQQQQEEEVEEVEV.

Homopentamer; forms a closed pentamer. Interacts with CUL3; interaction is direct and forms a 5:5 heterodecamer. Interacts with TCHP. Interacts with CUL3, as part of the BCR(KCTD17) E3 ubiquitin ligase complex, at least composed of CUL3, KCTD17 and RBX1. In terms of tissue distribution, highly expressed in brain. Highest expression is observed in the putamen and the thalamus.

The protein localises to the cytoplasm. Its function is as follows. Substrate-adapter for CUL3-RING ubiquitin ligase complexes which mediates the ubiquitination and subsequent proteasomal degradation of TCHP, a protein involved in ciliogenesis down-regulation. Thereby, positively regulates ciliogenesis, playing a crucial role in the initial steps of axoneme extension. May also play a role in endoplasmic reticulum calcium ion homeostasis. This is BTB/POZ domain-containing protein KCTD17 from Homo sapiens (Human).